The sequence spans 213 residues: Nucleolar protein 12 (213 aa).

Positions 32-95 form a coiled coil; it reads GFHKRKVERK…RLVTAKTESV (64 aa). Residues 117-213 form a disordered region; sequence ARLLGLPTPE…LTGKARHSGE (97 aa). Basic residues-rich tracts occupy residues 169 to 181 and 197 to 213; these read AHSR…KRLR and SKTR…HSGE.

It belongs to the RRP17 family. In terms of assembly, interacts with KIAA1191.

The protein localises to the nucleus. It is found in the nucleolus. Its subcellular location is the cytoplasm. Multifunctional RNA binding protein that plays a role in RNA metabolism and DNA maintenance. Participates in the resolution of DNA stress and the maintenance of genome integrity by localizing to sites of DNA insults. Also plays a role in proper nucleolar organization by limiting nucleolar size and regulating nucleolar number. Mechanistically, regulates the nucleolar levels of fibrillarin and nucleolin, two key players in pre-rRNA processing and ribosome assembly. In Bos taurus (Bovine), this protein is Nucleolar protein 12 (NOL12).